The primary structure comprises 532 residues: Intercellular adhesion molecule 1 (532 aa).

A signal peptide spans 1 to 27 (MAPSSPRPALPALLVLLGALFPGPGNA). The Extracellular portion of the chain corresponds to 28–480 (QTSVSPPKVI…TVNVLSPRYE (453 aa)). Ig-like C2-type domains lie at 41–103 (GGSV…QSTA) and 128–193 (GKDL…LDLR). 3 disulfides stabilise this stretch: C48–C92, C52–C96, and C135–C186. A Cell attachment site; atypical motif is present at residues 152-154 (RGE). N-linked (GlcNAc...) asparagine glycosylation is found at N202 and N267. Ig-like C2-type domains lie at 230 to 297 (DTQG…LGTQ) and 325 to 378 (GTEV…LEVA). 2 disulfides stabilise this stretch: C237–C290 and C332–C371. N-linked (GlcNAc...) asparagine glycans are attached at residues N385 and N406. Disulfide bonds link C403–C419, C419–C457, and C431–C457. The Ig-like C2-type 5 domain occupies 412-464 (NSQQTPMCQAWGNPLPELKCLKDGTFPLPVGESVTVTRDLEGTYLCRARSTQG). Residues 481–503 (FVIIAVVAAAVIMGTAGLSTYLY) traverse the membrane as a helical segment. The Cytoplasmic portion of the chain corresponds to 504–532 (NRQRKIRKYRLQQAQKGTPMKPNTQATPP). A phosphothreonine mark is found at T521 and T530.

Belongs to the immunoglobulin superfamily. ICAM family. In terms of assembly, homodimer. Interacts with MUC1 and promotes cell aggregation in epithelial cells. Interacts with ARHGEF26/SGEF. Interacts (on T cell side) with CD81, CD247 and CD9 at immunological synapses between antigen-presenting cells and T cells. Monoubiquitinated, which is promoted by MARCH9 and leads to endocytosis.

Its subcellular location is the membrane. In terms of biological role, ICAM proteins are ligands for the leukocyte adhesion protein LFA-1 (integrin alpha-L/beta-2). During leukocyte trans-endothelial migration, ICAM1 engagement promotes the assembly of endothelial apical cups through ARHGEF26/SGEF and RHOG activation. In Gorilla gorilla gorilla (Western lowland gorilla), this protein is Intercellular adhesion molecule 1 (ICAM1).